The chain runs to 266 residues: Methionine aminopeptidase 1 (266 aa).

Residue His-88 coordinates substrate. 3 residues coordinate a divalent metal cation: Asp-106, Asp-117, and His-186. His-193 provides a ligand contact to substrate. Positions 219 and 250 each coordinate a divalent metal cation.

The protein belongs to the peptidase M24A family. Methionine aminopeptidase type 1 subfamily. In terms of assembly, monomer. Co(2+) serves as cofactor. Requires Zn(2+) as cofactor. Mn(2+) is required as a cofactor. It depends on Fe(2+) as a cofactor.

It carries out the reaction Release of N-terminal amino acids, preferentially methionine, from peptides and arylamides.. Its function is as follows. Removes the N-terminal methionine from nascent proteins. The N-terminal methionine is often cleaved when the second residue in the primary sequence is small and uncharged (Met-Ala-, Cys, Gly, Pro, Ser, Thr, or Val). Requires deformylation of the N(alpha)-formylated initiator methionine before it can be hydrolyzed. The polypeptide is Methionine aminopeptidase 1 (Mycobacterium tuberculosis (strain CDC 1551 / Oshkosh)).